A 406-amino-acid polypeptide reads, in one-letter code: Subtilisin-like protease CPC735_023170 (406 aa).

Residues 1-20 (MRLFQSTCVLVGTVLPLFTA) form the signal peptide. The propeptide occupies 21-118 (FPISSPREIE…VEPDSMAYVT (98 aa)). Positions 35 to 115 (KYIITFKKGI…VESVEPDSMA (81 aa)) constitute an Inhibitor I9 domain. Asn-125 is a glycosylation site (N-linked (GlcNAc...) asparagine). One can recognise a Peptidase S8 domain in the interval 127-406 (TYGPRRISHR…NKLAYNGSGK (280 aa)). Active-site charge relay system residues include Asp-161 and His-192. N-linked (GlcNAc...) asparagine glycosylation occurs at Asn-239. The segment at 283–309 (NDGRDAGRNSPGSAPESITVGSINSRR) is disordered. Asn-346 carries an N-linked (GlcNAc...) asparagine glycan. The active-site Charge relay system is Ser-351. Asn-402 carries an N-linked (GlcNAc...) asparagine glycan.

Belongs to the peptidase S8 family.

It localises to the secreted. Secreted subtilisin-like serine protease with keratinolytic activity that contributes to pathogenicity. The polypeptide is Subtilisin-like protease CPC735_023170 (Coccidioides posadasii (strain C735) (Valley fever fungus)).